A 290-amino-acid chain; its full sequence is MMRIFLFLATNLAVLVIASITLKLLGVDRYTGQNYGSLLVFCAVFGFAGSLISLFISKWMAKMSTRTEIISQPRTRHEQWLLQTVEQLSREAGIKMPEVGIFPAYEANAFATGWNRNDALVAVSQGLLERFSPDEVRAVLAHEIGHVANGDMVTLALIQGVVNTFVMFFARIFGNFVDKAILKNEDGHGIGYFVATIFAELVLGILASIIVMWFSRKREYRADEAGAQLAGTSAMIGALQRLRAEQGLPVHMPDSLKAFGINGSLKHGMAGLFMTHPSLEDRIEALRQRG.

Transmembrane regions (helical) follow at residues 4–24 (IFLF…TLKL) and 36–56 (GSLL…SLFI). H142 serves as a coordination point for Zn(2+). E143 is an active-site residue. Zn(2+) is bound at residue H146. Transmembrane regions (helical) follow at residues 150–170 (GDMV…MFFA) and 193–213 (FVAT…IVMW). Position 219 (E219) interacts with Zn(2+).

The protein belongs to the peptidase M48B family. Requires Zn(2+) as cofactor.

The protein resides in the cell inner membrane. This Stutzerimonas stutzeri (strain A1501) (Pseudomonas stutzeri) protein is Protease HtpX.